We begin with the raw amino-acid sequence, 414 residues long: Glutamyl-tRNA reductase (414 aa).

Residues T49–R52, S108, E113–Q115, and Q119 contribute to the substrate site. Catalysis depends on C50, which acts as the Nucleophile. G188–G193 contacts NADP(+).

Belongs to the glutamyl-tRNA reductase family. As to quaternary structure, homodimer.

The catalysed reaction is (S)-4-amino-5-oxopentanoate + tRNA(Glu) + NADP(+) = L-glutamyl-tRNA(Glu) + NADPH + H(+). Its pathway is porphyrin-containing compound metabolism; protoporphyrin-IX biosynthesis; 5-aminolevulinate from L-glutamyl-tRNA(Glu): step 1/2. Its function is as follows. Catalyzes the NADPH-dependent reduction of glutamyl-tRNA(Glu) to glutamate 1-semialdehyde (GSA). This Francisella tularensis subsp. tularensis (strain WY96-3418) protein is Glutamyl-tRNA reductase.